We begin with the raw amino-acid sequence, 200 residues long: Large ribosomal subunit protein uL4 (200 aa).

Residues Arg-43 to Ile-72 are disordered.

Belongs to the universal ribosomal protein uL4 family. As to quaternary structure, part of the 50S ribosomal subunit.

Its function is as follows. One of the primary rRNA binding proteins, this protein initially binds near the 5'-end of the 23S rRNA. It is important during the early stages of 50S assembly. It makes multiple contacts with different domains of the 23S rRNA in the assembled 50S subunit and ribosome. Forms part of the polypeptide exit tunnel. The sequence is that of Large ribosomal subunit protein uL4 from Haemophilus ducreyi (strain 35000HP / ATCC 700724).